The sequence spans 1040 residues: Myoblast growth factor receptor egl-15 (1040 aa).

The first 19 residues, 1–19 (MSYFLASCLGVGLLSTVSC), serve as a signal peptide directing secretion. Residues 20 to 525 (SLQGLTSHYR…PKIDRWTTSD (506 aa)) are Extracellular-facing. The 93-residue stretch at 33 to 125 (PRFKHVANER…GQISRNFTVE (93 aa)) folds into the Ig-like C2-type 1 domain. A disulfide bridge connects residues C55 and C109. N121 carries N-linked (GlcNAc...) asparagine glycosylation. The segment covering 234–257 (VHDSEESPSESRTEFINADEKENK) has biased composition (basic and acidic residues). Residues 234-267 (VHDSEESPSESRTEFINADEKENKEDEEEDYSVS) are disordered. N280 and N299 each carry an N-linked (GlcNAc...) asparagine glycan. 2 Ig-like C2-type domains span residues 287–383 (PYFK…FHVI) and 391–501 (PPII…ATLT). C314 and C367 are joined by a disulfide. Residues N401, N407, N433, N440, N449, N474, and N497 are each glycosylated (N-linked (GlcNAc...) asparagine). A disulfide bridge connects residues C414 and C485. The helical transmembrane segment at 526 to 549 (YIFTTILLFLLLAATLFGILFMVC) threads the bilayer. Over 550-1040 (KQTLHKKGFM…NNNSMSKPEF (491 aa)) the chain is Cytoplasmic. Residues 640–931 (LSLVHMLGEG…KTIVDYLDWM (292 aa)) form the Protein kinase domain. ATP is bound by residues 646–654 (LGEGAFGEV) and K672. The Proton acceptor role is filled by D797. Y828 carries the post-translational modification Phosphotyrosine; by autocatalysis. 2 disordered regions span residues 952–984 (ERST…LPSE) and 1021–1040 (TPET…KPEF). Polar residues predominate over residues 1022–1040 (PETSQRIPSNNNSMSKPEF).

It belongs to the protein kinase superfamily. Tyr protein kinase family. Fibroblast growth factor receptor subfamily. Mg(2+) serves as cofactor. Post-translationally, activity is regulated by the phosphatase clr-1, however it is not known whether clr-1 acts directly on egl-15.

The protein localises to the membrane. It carries out the reaction L-tyrosyl-[protein] + ATP = O-phospho-L-tyrosyl-[protein] + ADP + H(+). In terms of biological role, receptor tyrosine kinase required for larval development. May phosphorylate adapter protein soc-1 which in turn may result in the recruitment and/or activation of phosphatase ptp-2. May activate the Ras/MAPK kinase signaling pathway which includes sem-5, sos-1, let-60/Ras, lin-45/Raf, mek-2 and mpk-1. Acts in the hypodermis to regulate axon growth and fluid homeostasis. Activates protein degradation in muscles. Probably following interaction with ligand let-756, negatively regulates membrane protrusion from body wall muscles during larval development. Plays a role in nicotinic acetylcholine receptor (nAChR)-mediated sensitivity to nicotine. Regulates synaptic levels of nAChR subunit lev-1 in the nerve cord. Functionally, affects the maintenance of axon position without affecting axon growth. Interaction with egl-17 is required for the guidance of sex myoblast migration during gonad development. Interaction with let-756 appears to play a role in maintaining body morphology at higher temperatures. The sequence is that of Myoblast growth factor receptor egl-15 (egl-15) from Caenorhabditis elegans.